The primary structure comprises 485 residues: Glutamate--tRNA ligase (485 aa).

Residues Pro-11–Gly-21 carry the 'HIGH' region motif. The 'KMSKS' region signature appears at Lys-252–Arg-256. An ATP-binding site is contributed by Lys-255.

Belongs to the class-I aminoacyl-tRNA synthetase family. Glutamate--tRNA ligase type 1 subfamily. Monomer.

The protein localises to the cytoplasm. It catalyses the reaction tRNA(Glu) + L-glutamate + ATP = L-glutamyl-tRNA(Glu) + AMP + diphosphate. Catalyzes the attachment of glutamate to tRNA(Glu) in a two-step reaction: glutamate is first activated by ATP to form Glu-AMP and then transferred to the acceptor end of tRNA(Glu). This chain is Glutamate--tRNA ligase, found in Halalkalibacterium halodurans (strain ATCC BAA-125 / DSM 18197 / FERM 7344 / JCM 9153 / C-125) (Bacillus halodurans).